We begin with the raw amino-acid sequence, 701 residues long: Ubiquitin thioesterase zranb1-B (701 aa).

RanBP2-type zinc fingers lie at residues 3–33, 79–108, and 143–173; these read EDGI…PRPS, TSSK…QRRT, and IKGQ…PTPN. Zn(2+) is bound by residues Cys10, Cys13, Cys24, Cys27, Cys85, Cys88, Cys99, and Cys102. A compositionally biased stretch (polar residues) spans 108–121; it reads TRSPTESPQSSGSG. The interval 108 to 129 is disordered; sequence TRSPTESPQSSGSGLRSIPGPI. Cys150, Cys153, Cys164, and Cys167 together coordinate Zn(2+). The segment at 197–220 is disordered; it reads RWRGGCSSSNSQRRSPPTSKRDSD. Polar residues predominate over residues 202 to 214; that stretch reads CSSSNSQRRSPPT. 2 ANK repeats span residues 253-283 and 306-333; these read RKTD…SGGD and YTLV…QHAA. The 161-residue stretch at 425 to 585 folds into the OTU domain; the sequence is LYALWNRTAG…RGHFSALVAM (161 aa). The active-site Nucleophile is the Cys436. The active-site Proton acceptor is His578.

The protein belongs to the peptidase C64 family.

The protein resides in the cytoplasm. The protein localises to the nucleus. It catalyses the reaction Thiol-dependent hydrolysis of ester, thioester, amide, peptide and isopeptide bonds formed by the C-terminal Gly of ubiquitin (a 76-residue protein attached to proteins as an intracellular targeting signal).. Functionally, ubiquitin thioesterase, which specifically hydrolyzes 'Lys-29'-linked and 'Lys-33'-linked diubiquitin. Also cleaves 'Lys-63'-linked chains, but with 40-fold less efficiency compared to 'Lys-29'-linked ones. Positive regulator of the Wnt signaling pathway that deubiquitinates apc protein, a negative regulator of Wnt-mediated transcription. Acts as a regulator of autophagy by mediating deubiquitination of pik3c3/vps34, thereby promoting autophagosome maturation. Plays a role in the regulation of cell morphology and cytoskeletal organization. Required in the stress fiber dynamics and cell migration. This chain is Ubiquitin thioesterase zranb1-B (zranb1-b), found in Xenopus laevis (African clawed frog).